Reading from the N-terminus, the 99-residue chain is Aspartyl/glutamyl-tRNA(Asn/Gln) amidotransferase subunit C (99 aa).

This sequence belongs to the GatC family. In terms of assembly, heterotrimer of A, B and C subunits.

The enzyme catalyses L-glutamyl-tRNA(Gln) + L-glutamine + ATP + H2O = L-glutaminyl-tRNA(Gln) + L-glutamate + ADP + phosphate + H(+). It catalyses the reaction L-aspartyl-tRNA(Asn) + L-glutamine + ATP + H2O = L-asparaginyl-tRNA(Asn) + L-glutamate + ADP + phosphate + 2 H(+). In terms of biological role, allows the formation of correctly charged Asn-tRNA(Asn) or Gln-tRNA(Gln) through the transamidation of misacylated Asp-tRNA(Asn) or Glu-tRNA(Gln) in organisms which lack either or both of asparaginyl-tRNA or glutaminyl-tRNA synthetases. The reaction takes place in the presence of glutamine and ATP through an activated phospho-Asp-tRNA(Asn) or phospho-Glu-tRNA(Gln). This Kineococcus radiotolerans (strain ATCC BAA-149 / DSM 14245 / SRS30216) protein is Aspartyl/glutamyl-tRNA(Asn/Gln) amidotransferase subunit C.